Reading from the N-terminus, the 146-residue chain is Snaclec mucetin subunit beta (146 aa).

The first 23 residues, 1-23 (MGRFIFVSFGLLVVFISLSGTEA), serve as a signal peptide directing secretion. 3 disulfides stabilise this stretch: Cys27–Cys38, Cys55–Cys144, and Cys121–Cys136. Positions 34–145 (YDEHCYQVFQ…CSSKRYVVCK (112 aa)) constitute a C-type lectin domain.

Belongs to the snaclec family. In terms of assembly, dimer and tetramer of heterodimers of alpha and beta subunits ((alphabeta)(2) and (alphabeta)(4)); disulfide-linked. These two multimeric forms are found. The complex is glycosylated. As to expression, expressed by the venom gland.

It is found in the secreted. Its function is as follows. Potent platelet activator that acts via GPIb (GP1BA/GP1BB). After activation by the toxin, the receptor is redistributed on platelet surface thanks to cytoskeletal translocation. The indirect activation of integrin alpha-IIb/beta-3 (ITGA2B/ITGB3) also induced by the toxin is downstream the cytoskeletal translocation of GPIb. The protein is Snaclec mucetin subunit beta of Protobothrops mucrosquamatus (Taiwan habu).